Consider the following 130-residue polypeptide: MASVKLASLIVLFATLGMFLTKNVGAASCNGVCSPFEMPPCGSSACRCIPVGLLIGYCRNPSGVFLKGNDEHPNLCESDADCKKKGSGNFCGHYPNPDIEYGWCFASKSEAEDVFSKITPKDLLKSVSTA.

The N-terminal stretch at 1-26 (MASVKLASLIVLFATLGMFLTKNVGA) is a signal peptide. 3 disulfides stabilise this stretch: C29-C46, C33-C48, and C41-C58. Propeptides lie at residues 64–69 (VFLKGN) and 123–130 (LLKSVSTA).

In terms of processing, the C-terminal glycine may be removed from PA1b.

In terms of biological role, PA1b binds to basic 7S globulin (BG) and stimulates its phosphorylation activity. Involved in the signal transduction system to regulate the growth and differentiation as a hormone peptide. Toxic to various insects through binding to a high affinity binding site in the insect gut. This Pisum sativum (Garden pea) protein is Albumin-1 E.